Here is a 436-residue protein sequence, read N- to C-terminus: Putative F-box/FBD/LRR-repeat protein At5g44960 (436 aa).

The F-box domain occupies 4–50; it reads CDYINELPDSLLTQILLDLRTKDSVKTSVSSKRWRNLWLNVPGLDLF. LRR repeat units lie at residues 287–310 and 397–420; these read ISSV…SKLG and SAVL…SYKK. Residues 355–407 form the FBD domain; the sequence is EENIDFHEVPQCLISTLEYVHINKLMMMEQSGIKLVNYFIENSAVLKKLTLRF.

The protein is Putative F-box/FBD/LRR-repeat protein At5g44960 of Arabidopsis thaliana (Mouse-ear cress).